An 88-amino-acid chain; its full sequence is UPF0335 protein M446_5200 (88 aa).

It belongs to the UPF0335 family.

The sequence is that of UPF0335 protein M446_5200 from Methylobacterium sp. (strain 4-46).